The primary structure comprises 428 residues: Kynureninase (428 aa).

Residues Thr104, Thr105, 132-135 (FPSD), Asp213, His216, and Tyr238 contribute to the pyridoxal 5'-phosphate site. Lys239 is modified (N6-(pyridoxal phosphate)lysine). 2 residues coordinate pyridoxal 5'-phosphate: Trp267 and Thr295.

This sequence belongs to the kynureninase family. Homodimer. It depends on pyridoxal 5'-phosphate as a cofactor.

It carries out the reaction L-kynurenine + H2O = anthranilate + L-alanine + H(+). The catalysed reaction is 3-hydroxy-L-kynurenine + H2O = 3-hydroxyanthranilate + L-alanine + H(+). It participates in amino-acid degradation; L-kynurenine degradation; L-alanine and anthranilate from L-kynurenine: step 1/1. Its pathway is cofactor biosynthesis; NAD(+) biosynthesis; quinolinate from L-kynurenine: step 2/3. Its function is as follows. Catalyzes the cleavage of L-kynurenine (L-Kyn) and L-3-hydroxykynurenine (L-3OHKyn) into anthranilic acid (AA) and 3-hydroxyanthranilic acid (3-OHAA), respectively. This is Kynureninase from Bacillus anthracis.